The chain runs to 420 residues: 3-isopropylmalate dehydratase large subunit (420 aa).

Cys300, Cys361, and Cys364 together coordinate [4Fe-4S] cluster.

This sequence belongs to the aconitase/IPM isomerase family. LeuC type 2 subfamily. As to quaternary structure, heterodimer of LeuC and LeuD. [4Fe-4S] cluster is required as a cofactor.

The enzyme catalyses (2R,3S)-3-isopropylmalate = (2S)-2-isopropylmalate. It functions in the pathway amino-acid biosynthesis; L-leucine biosynthesis; L-leucine from 3-methyl-2-oxobutanoate: step 2/4. Functionally, catalyzes the isomerization between 2-isopropylmalate and 3-isopropylmalate, via the formation of 2-isopropylmaleate. The sequence is that of 3-isopropylmalate dehydratase large subunit from Endomicrobium trichonymphae.